The chain runs to 387 residues: Phosphoglycerate kinase (387 aa).

Substrate contacts are provided by residues 21 to 23 (DLN), Arg-36, 59 to 62 (HLGR), Arg-113, and Arg-146. ATP is bound by residues Lys-197, Glu-314, and 340-343 (GGDT).

It belongs to the phosphoglycerate kinase family. Monomer.

Its subcellular location is the cytoplasm. It catalyses the reaction (2R)-3-phosphoglycerate + ATP = (2R)-3-phospho-glyceroyl phosphate + ADP. It participates in carbohydrate degradation; glycolysis; pyruvate from D-glyceraldehyde 3-phosphate: step 2/5. The polypeptide is Phosphoglycerate kinase (Pseudomonas entomophila (strain L48)).